The sequence spans 104 residues: NADH-quinone oxidoreductase subunit K (104 aa).

A run of 3 helical transmembrane segments spans residues 4–24 (VPAS…LFGA), 31–51 (VIVL…LVAF), and 67–87 (LFTM…LIAL).

Belongs to the complex I subunit 4L family. In terms of assembly, NDH-1 is composed of 14 different subunits. Subunits NuoA, H, J, K, L, M, N constitute the membrane sector of the complex.

Its subcellular location is the cell membrane. It carries out the reaction a quinone + NADH + 5 H(+)(in) = a quinol + NAD(+) + 4 H(+)(out). Its function is as follows. NDH-1 shuttles electrons from NADH, via FMN and iron-sulfur (Fe-S) centers, to quinones in the respiratory chain. The immediate electron acceptor for the enzyme in this species is believed to be a menaquinone. Couples the redox reaction to proton translocation (for every two electrons transferred, four hydrogen ions are translocated across the cytoplasmic membrane), and thus conserves the redox energy in a proton gradient. The polypeptide is NADH-quinone oxidoreductase subunit K (Bacillus cereus (strain Q1)).